Consider the following 185-residue polypeptide: Adenine phosphoribosyltransferase (185 aa).

The protein belongs to the purine/pyrimidine phosphoribosyltransferase family. Homodimer.

It localises to the cytoplasm. It carries out the reaction AMP + diphosphate = 5-phospho-alpha-D-ribose 1-diphosphate + adenine. The protein operates within purine metabolism; AMP biosynthesis via salvage pathway; AMP from adenine: step 1/1. Its function is as follows. Catalyzes a salvage reaction resulting in the formation of AMP, that is energically less costly than de novo synthesis. This Pectobacterium atrosepticum (strain SCRI 1043 / ATCC BAA-672) (Erwinia carotovora subsp. atroseptica) protein is Adenine phosphoribosyltransferase.